A 318-amino-acid chain; its full sequence is Transaldolase (318 aa).

Catalysis depends on Lys132, which acts as the Schiff-base intermediate with substrate.

The protein belongs to the transaldolase family. Type 1 subfamily. In terms of assembly, homodimer.

It localises to the cytoplasm. It catalyses the reaction D-sedoheptulose 7-phosphate + D-glyceraldehyde 3-phosphate = D-erythrose 4-phosphate + beta-D-fructose 6-phosphate. It participates in carbohydrate degradation; pentose phosphate pathway; D-glyceraldehyde 3-phosphate and beta-D-fructose 6-phosphate from D-ribose 5-phosphate and D-xylulose 5-phosphate (non-oxidative stage): step 2/3. Functionally, transaldolase is important for the balance of metabolites in the pentose-phosphate pathway. The protein is Transaldolase of Shewanella piezotolerans (strain WP3 / JCM 13877).